The primary structure comprises 226 residues: Cytidylate kinase (226 aa).

Residue 10 to 18 (GPASSGKST) participates in ATP binding.

Belongs to the cytidylate kinase family. Type 1 subfamily.

It localises to the cytoplasm. It carries out the reaction CMP + ATP = CDP + ADP. It catalyses the reaction dCMP + ATP = dCDP + ADP. The polypeptide is Cytidylate kinase (Streptococcus pyogenes serotype M1).